Here is a 336-residue protein sequence, read N- to C-terminus: Holliday junction branch migration complex subunit RuvB (336 aa).

Residues 4–184 are large ATPase domain (RuvB-L); that stretch reads SDRLISSQSI…FGIVQRLEYY (181 aa). ATP contacts are provided by residues isoleucine 23, arginine 24, glycine 65, lysine 68, threonine 69, threonine 70, 131 to 133, arginine 174, tyrosine 184, and arginine 221; that span reads EDY. Threonine 69 is a binding site for Mg(2+). A small ATPAse domain (RuvB-S) region spans residues 185 to 255; that stretch reads SVDSLTQIVA…MAQQALEMLE (71 aa). Residues 258–336 form a head domain (RuvB-H) region; that stretch reads QHGFDLMDRK…HFGFSAIEQE (79 aa). 2 residues coordinate DNA: arginine 313 and arginine 318.

The protein belongs to the RuvB family. In terms of assembly, homohexamer. Forms an RuvA(8)-RuvB(12)-Holliday junction (HJ) complex. HJ DNA is sandwiched between 2 RuvA tetramers; dsDNA enters through RuvA and exits via RuvB. An RuvB hexamer assembles on each DNA strand where it exits the tetramer. Each RuvB hexamer is contacted by two RuvA subunits (via domain III) on 2 adjacent RuvB subunits; this complex drives branch migration. In the full resolvosome a probable DNA-RuvA(4)-RuvB(12)-RuvC(2) complex forms which resolves the HJ.

Its subcellular location is the cytoplasm. The catalysed reaction is ATP + H2O = ADP + phosphate + H(+). Its function is as follows. The RuvA-RuvB-RuvC complex processes Holliday junction (HJ) DNA during genetic recombination and DNA repair, while the RuvA-RuvB complex plays an important role in the rescue of blocked DNA replication forks via replication fork reversal (RFR). RuvA specifically binds to HJ cruciform DNA, conferring on it an open structure. The RuvB hexamer acts as an ATP-dependent pump, pulling dsDNA into and through the RuvAB complex. RuvB forms 2 homohexamers on either side of HJ DNA bound by 1 or 2 RuvA tetramers; 4 subunits per hexamer contact DNA at a time. Coordinated motions by a converter formed by DNA-disengaged RuvB subunits stimulates ATP hydrolysis and nucleotide exchange. Immobilization of the converter enables RuvB to convert the ATP-contained energy into a lever motion, pulling 2 nucleotides of DNA out of the RuvA tetramer per ATP hydrolyzed, thus driving DNA branch migration. The RuvB motors rotate together with the DNA substrate, which together with the progressing nucleotide cycle form the mechanistic basis for DNA recombination by continuous HJ branch migration. Branch migration allows RuvC to scan DNA until it finds its consensus sequence, where it cleaves and resolves cruciform DNA. This is Holliday junction branch migration complex subunit RuvB from Legionella pneumophila (strain Lens).